The sequence spans 440 residues: WAS/WASL-interacting protein family member 2 (440 aa).

Residues M1–T18 are compositionally biased toward pro residues. The segment at M1 to G36 is disordered. The WH2 domain maps to G36–V53. An Asymmetric dimethylarginine modification is found at R37. The interval K49 to K52 is binds actin. 2 disordered regions span residues I56–T387 and R419–R440. Residues P116–R133 are compositionally biased toward low complexity. Residues R161–H172 show a composition bias toward polar residues. Composition is skewed to pro residues over residues A176–L193, E222–P236, A249–P262, and R356–L378.

It belongs to the verprolin family. In terms of assembly, interacts with WASL and WASP, and this interaction results in cytoplasmic relocation of these two proteins along actin filaments. Interacts with NCK2 resulting in the localization to sites of focal adhesions. No interaction was seen with WASF2 and WASF3. Expressed mainly in brain, colon, lung and stomach (at protein level). Ubiquitously expressed, with high expression in brain, kidney, lung, and placenta.

Its subcellular location is the cytoplasm. The protein resides in the cytoskeleton. Its function is as follows. Plays an active role in the formation of cell surface protrusions downstream of activated PDGFB receptors. Plays an important role in actin-microspike formation through cooperation with WASL. May cooperate with WASP and WASL to induce mobilization and reorganization of the actin filament system. This chain is WAS/WASL-interacting protein family member 2 (WIPF2), found in Homo sapiens (Human).